A 286-amino-acid chain; its full sequence is S-methyl-5'-thioadenosine phosphorylase (286 aa).

Phosphate is bound by residues Ser11, 53 to 54 (RH), and 86 to 87 (SA). Met185 is a substrate binding site. Thr186 is a binding site for phosphate. 209 to 211 (DYD) contributes to the substrate binding site.

Belongs to the PNP/MTAP phosphorylase family. MTAP subfamily. In terms of assembly, homohexamer. Dimer of a homotrimer.

The enzyme catalyses S-methyl-5'-thioadenosine + phosphate = 5-(methylsulfanyl)-alpha-D-ribose 1-phosphate + adenine. Its pathway is amino-acid biosynthesis; L-methionine biosynthesis via salvage pathway; S-methyl-5-thio-alpha-D-ribose 1-phosphate from S-methyl-5'-thioadenosine (phosphorylase route): step 1/1. Catalyzes the reversible phosphorylation of S-methyl-5'-thioadenosine (MTA) to adenine and 5-methylthioribose-1-phosphate. Involved in the breakdown of MTA, a major by-product of polyamine biosynthesis. Responsible for the first step in the methionine salvage pathway after MTA has been generated from S-adenosylmethionine. Has broad substrate specificity with 6-aminopurine nucleosides as preferred substrates. The sequence is that of S-methyl-5'-thioadenosine phosphorylase from Geobacter sulfurreducens (strain ATCC 51573 / DSM 12127 / PCA).